The primary structure comprises 37 residues: Cytochrome b6-f complex subunit 5 (37 aa).

The helical transmembrane segment at 5–25 threads the bilayer; the sequence is LLSGIVLGLIPITLAGLFVTA.

Belongs to the PetG family. As to quaternary structure, the 4 large subunits of the cytochrome b6-f complex are cytochrome b6, subunit IV (17 kDa polypeptide, PetD), cytochrome f and the Rieske protein, while the 4 small subunits are PetG, PetL, PetM and PetN. The complex functions as a dimer.

It localises to the plastid. Its subcellular location is the chloroplast thylakoid membrane. In terms of biological role, component of the cytochrome b6-f complex, which mediates electron transfer between photosystem II (PSII) and photosystem I (PSI), cyclic electron flow around PSI, and state transitions. PetG is required for either the stability or assembly of the cytochrome b6-f complex. This is Cytochrome b6-f complex subunit 5 from Cryptomeria japonica (Japanese cedar).